A 507-amino-acid polypeptide reads, in one-letter code: Probable DNA ligase (507 aa).

Glutamate 209 lines the ATP pocket. Catalysis depends on lysine 211, which acts as the N6-AMP-lysine intermediate. Residues arginine 216, arginine 231, glutamate 260, phenylalanine 295, arginine 366, and lysine 372 each contribute to the ATP site.

Belongs to the ATP-dependent DNA ligase family. The cofactor is Mg(2+).

It carries out the reaction ATP + (deoxyribonucleotide)n-3'-hydroxyl + 5'-phospho-(deoxyribonucleotide)m = (deoxyribonucleotide)n+m + AMP + diphosphate.. DNA ligase that seals nicks in double-stranded DNA during DNA replication, DNA recombination and DNA repair. The protein is Probable DNA ligase of Pseudarthrobacter chlorophenolicus (strain ATCC 700700 / DSM 12829 / CIP 107037 / JCM 12360 / KCTC 9906 / NCIMB 13794 / A6) (Arthrobacter chlorophenolicus).